The chain runs to 310 residues: Protoheme IX farnesyltransferase 2 (310 aa).

Helical transmembrane passes span 25-45, 49-69, 98-118, 121-141, 145-165, 176-196, 222-242, 245-265, and 277-297; these read PGII…AAKG, LVLM…GCAI, HVLL…ALFT, LALL…SLYM, SVYG…VGYC, VILL…IAIF, IVLY…AGYT, AFMA…LKGY, and QVFG…ALDF.

Belongs to the UbiA prenyltransferase family. Protoheme IX farnesyltransferase subfamily.

It is found in the cell inner membrane. The catalysed reaction is heme b + (2E,6E)-farnesyl diphosphate + H2O = Fe(II)-heme o + diphosphate. Its pathway is porphyrin-containing compound metabolism; heme O biosynthesis; heme O from protoheme: step 1/1. In terms of biological role, converts heme B (protoheme IX) to heme O by substitution of the vinyl group on carbon 2 of heme B porphyrin ring with a hydroxyethyl farnesyl side group. The polypeptide is Protoheme IX farnesyltransferase 2 (Shewanella sp. (strain MR-4)).